We begin with the raw amino-acid sequence, 455 residues long: Differentiation-associated protein 1 (455 aa).

A signal peptide spans 1 to 21 (MKFKLFLLVFFVFLLPYLSQS). Residues 349–434 (IGSSSSSSSS…SDDDLGNPSS (86 aa)) form a disordered region. The span at 351-423 (SSSSSSSSSS…KSNHTSSESS (73 aa)) shows a compositional bias: low complexity. The GPI-like-anchor amidated serine moiety is linked to residue Ser-433. Residues 434–455 (SSSILSVSKLIILLISIILYCF) constitute a propeptide, removed in mature form.

It is found in the cell membrane. Functionally, plays a role in differentiation. This Dictyostelium discoideum (Social amoeba) protein is Differentiation-associated protein 1 (dia1).